Consider the following 204-residue polypeptide: CASP-like protein 2U2 (204 aa).

Topologically, residues 1–36 (MGVLGGDAHVPIGSQVSPGSVVVTNNESFGHRKLLK) are cytoplasmic. Residues 37 to 57 (GVDFLVRIKAFAFCLAVIVLL) traverse the membrane as a helical segment. Over 58-84 (KNNVQTTVIAPGIVLQAKYNNTKAPVS) the chain is Extracellular. Asn-77 is a glycosylation site (N-linked (GlcNAc...) asparagine). Residues 85–105 (LLVLASICCGYAFLQAVVSLL) form a helical membrane-spanning segment. Topologically, residues 106–117 (SFIRDKRVLNNT) are cytoplasmic. A helical transmembrane segment spans residues 118–138 (VLAWLTFLLDQVLTYLLLGSA). At 139–170 (AATAEAAYIAKRGEDKVQWKAVCGPFKRFCDH) the chain is on the extracellular side. The helical transmembrane segment at 171-191 (FAATVFLSFIAVIAFAVSAAI) threads the bilayer. Over 192-204 (SAYYLFRKSKGFK) the chain is Cytoplasmic.

The protein belongs to the Casparian strip membrane proteins (CASP) family. Homodimer and heterodimers.

It is found in the cell membrane. This Selaginella moellendorffii (Spikemoss) protein is CASP-like protein 2U2.